Reading from the N-terminus, the 1212-residue chain is DNA-directed RNA polymerase subunit beta'' (1212 aa).

Zn(2+)-binding residues include C229, C302, C309, and C312. The segment at 1162 to 1212 is disordered; that stretch reads QKETSKNKKETSKNKKETSKNKKETSKNKKETSKNKKETSKNKKEASKNKK.

This sequence belongs to the RNA polymerase beta' chain family. RpoC2 subfamily. As to quaternary structure, in plastids the minimal PEP RNA polymerase catalytic core is composed of four subunits: alpha, beta, beta', and beta''. When a (nuclear-encoded) sigma factor is associated with the core the holoenzyme is formed, which can initiate transcription. Requires Zn(2+) as cofactor.

The protein localises to the plastid. The protein resides in the chloroplast. It carries out the reaction RNA(n) + a ribonucleoside 5'-triphosphate = RNA(n+1) + diphosphate. Functionally, DNA-dependent RNA polymerase catalyzes the transcription of DNA into RNA using the four ribonucleoside triphosphates as substrates. The chain is DNA-directed RNA polymerase subunit beta'' from Cryptomeria japonica (Japanese cedar).